The following is a 316-amino-acid chain: MGRVYYINSHGTLSRHENTLRFENAEVKKDIPVEDVEEIFVFAELSLNTKLLNFLASKGIPLHFFNYYGYYTGTFYPRESSVSGHLLIKQVEHYLDAQKRLYLAKSFVIGSILNLEYVYKISADTYLNKVKETNSIPELMSVEAEFRKLCYKKLEEVTGWELEKRTKRPPQNPLNALISFGNSLTYAKVLGEIYKTQLNPTVSYLHEPSTKRFSLSLDVAEVFKPIFVDNLIIRLIQENKIDKTHFSTELNMTFLNEIGRKVFLKAFNELLETTIFYPKLNRKVSHRTLIKLELYKLIKHLLEEEVYLPLNYGGLK.

Residues glutamate 143, histidine 206, and glutamate 221 each coordinate Mn(2+).

This sequence belongs to the CRISPR-associated endonuclease Cas1 family. As to quaternary structure, homodimer, forms a heterotetramer with a Cas2 homodimer. It depends on Mg(2+) as a cofactor. Requires Mn(2+) as cofactor.

Its function is as follows. CRISPR (clustered regularly interspaced short palindromic repeat), is an adaptive immune system that provides protection against mobile genetic elements (viruses, transposable elements and conjugative plasmids). CRISPR clusters contain spacers, sequences complementary to antecedent mobile elements, and target invading nucleic acids. CRISPR clusters are transcribed and processed into CRISPR RNA (crRNA). Acts as a dsDNA endonuclease. Involved in the integration of spacer DNA into the CRISPR cassette. This is CRISPR-associated endonuclease Cas1 from Aquifex aeolicus (strain VF5).